Consider the following 219-residue polypeptide: MSETAPAAPAAPAPAEKTPVKKKARKSAGAAKRKASGPPVSELITKAVAASKERSGVSLAALKKALAAAGYDVEKNNSRIKLGLKSLVSKGTLVQTKGTGASGSFKLNKKAAAGEAKPKPKKAGAAKPKKPAGAAKKPKKATGAATPKKGAKKTPKKAKKPAAAAGAKKAKSPKKAKAAKPKKAPKSPAKAKAVKPKAAKPKAAKPKTAKPKKAPAKKK.

A compositionally biased stretch (low complexity) spans methionine 1 to alanine 15. The interval methionine 1 to serine 41 is disordered. Serine 2 is subject to N-acetylserine. Serine 2 carries the post-translational modification Phosphoserine. Lysine 17 carries the post-translational modification N6-acetyllysine. Threonine 18 bears the Phosphothreonine mark. Residues valine 20–alanine 35 are compositionally biased toward basic residues. Lysine 26 is subject to N6-acetyllysine; alternate. Residue lysine 26 is modified to N6-methyllysine; alternate. Lysine 34 bears the N6-(beta-hydroxybutyryl)lysine; alternate mark. An N6-succinyllysine; alternate modification is found at lysine 34. Serine 36 is modified (phosphoserine). The 74-residue stretch at serine 36 to lysine 109 folds into the H15 domain. N6-(beta-hydroxybutyryl)lysine is present on lysine 52. At arginine 54 the chain carries Citrulline. 4 positions are modified to N6-(beta-hydroxybutyryl)lysine: lysine 64, lysine 85, lysine 90, and lysine 106. The tract at residues glycine 91–lysine 219 is disordered. Residues lysine 119–lysine 140 are compositionally biased toward basic residues. Residue threonine 146 is modified to Phosphothreonine. Basic residues-rich tracts occupy residues lysine 149–lysine 160 and lysine 168–proline 185. Serine 187 bears the Phosphoserine mark. Residues lysine 192–lysine 219 are compositionally biased toward basic residues.

The protein belongs to the histone H1/H5 family. Post-translationally, H1 histones are progressively phosphorylated during the cell cycle, becoming maximally phosphorylated during late G2 phase and M phase, and being dephosphorylated sharply thereafter. Acetylated at Lys-26. Deacetylated at Lys-26 by SIRT1. In terms of processing, citrullination at Arg-54 (H1R54ci) by PADI4 takes place within the DNA-binding site of H1 and results in its displacement from chromatin and global chromatin decondensation, thereby promoting pluripotency and stem cell maintenance.

Its subcellular location is the nucleus. The protein localises to the chromosome. Its function is as follows. Histone H1 protein binds to linker DNA between nucleosomes forming the macromolecular structure known as the chromatin fiber. Histones H1 are necessary for the condensation of nucleosome chains into higher-order structured fibers. Also acts as a regulator of individual gene transcription through chromatin remodeling, nucleosome spacing and DNA methylation. The chain is Histone H1.4 from Oryctolagus cuniculus (Rabbit).